Consider the following 365-residue polypeptide: Peptide chain release factor 2 (365 aa).

Residue Gln-251 is modified to N5-methylglutamine.

The protein belongs to the prokaryotic/mitochondrial release factor family. In terms of processing, methylated by PrmC. Methylation increases the termination efficiency of RF2.

The protein localises to the cytoplasm. In terms of biological role, peptide chain release factor 2 directs the termination of translation in response to the peptide chain termination codons UGA and UAA. This Aliarcobacter butzleri (strain RM4018) (Arcobacter butzleri) protein is Peptide chain release factor 2.